We begin with the raw amino-acid sequence, 356 residues long: MEILEEKPKEGKVKIKVETLDDLWHLYHIITPGDVVYAKTLRKQSQRSDSLRPEKVEVIPVFLGVKVEKINFHKFANQLRVTGPIIYASREDVPLGKYHTIAVEPGTIITLQKERWKPYYIERLKEAVEASKRAKVMIVTIEDGEAEMAIVREYGLDFIATIRHNLGGKRYNIKREDEERKFFHDVAKTMKDVMSRENIQRAIVAGPGFYKEDFYKFLKENYPDLASKIVLDDTSMGGRVGIYEVIKRGTVDKVYSESRIANEIKLVEKVIERIAKDEPVAYGMKEVEEAVNYGAVEILLVLDELLKGDNREKVEELMELARSLRSKVVVVSSEHEGGEKLKALGGIAGILRFKIK.

The protein belongs to the eukaryotic release factor 1 family. Pelota subfamily. In terms of assembly, monomer. The cofactor is a divalent metal cation.

It localises to the cytoplasm. May function in recognizing stalled ribosomes, interact with stem-loop structures in stalled mRNA molecules, and effect endonucleolytic cleavage of the mRNA. May play a role in the release non-functional ribosomes and degradation of damaged mRNAs. Has endoribonuclease activity. The protein is Protein pelota homolog of Pyrococcus horikoshii (strain ATCC 700860 / DSM 12428 / JCM 9974 / NBRC 100139 / OT-3).